Here is a 133-residue protein sequence, read N- to C-terminus: Small ribosomal subunit protein uS8 (133 aa).

It belongs to the universal ribosomal protein uS8 family. In terms of assembly, part of the 30S ribosomal subunit. Contacts proteins S5 and S12.

Functionally, one of the primary rRNA binding proteins, it binds directly to 16S rRNA central domain where it helps coordinate assembly of the platform of the 30S subunit. This chain is Small ribosomal subunit protein uS8, found in Orientia tsutsugamushi (strain Ikeda) (Rickettsia tsutsugamushi).